We begin with the raw amino-acid sequence, 538 residues long: Beta-1-syntrophin (538 aa).

Alanine 2 is modified (N-acetylalanine). PH domains are found at residues 19-298 (RAQR…SNVN) and 322-433 (EIRH…QGCH). Residues serine 87, serine 126, and serine 205 each carry the phosphoserine modification. Positions 112 to 195 (GVKVLKQELG…EVLLEVKYMR (84 aa)) constitute a PDZ domain. A disordered region spans residues 205-237 (SPVSEIGWETPPPESPRLGGSTSDPPSSQSFSF). Threonine 214 carries the post-translational modification Phosphothreonine. Phosphoserine occurs at positions 219, 232, 236, and 389. Low complexity predominate over residues 225–236 (STSDPPSSQSFS). The 57-residue stretch at 482-538 (PYEKLKMSSDDGIRMLYLDFGGKDGEIQLDLHSCPKPIVFIIHSFLSAKITRLGLVA) folds into the SU domain. A calmodulin-binding region spans residues 518 to 538 (PIVFIIHSFLSAKITRLGLVA).

This sequence belongs to the syntrophin family. Monomer and homodimer. Interacts with the other members of the syntrophin family SNTA1 and SNTB2; with the sodium channel proteins SCN4A and SCN5A. Interacts with the viral HTLV-1 TAX protein and with dystrophin protein DMD and related proteins DTNA and UTRN. Interacts with DTNB. In terms of processing, phosphorylated by CaM-kinase II. In terms of tissue distribution, ubiquitous.

It is found in the cell membrane. The protein resides in the sarcolemma. It localises to the cell junction. The protein localises to the cytoplasm. Its subcellular location is the cytoskeleton. Adapter protein that binds to and probably organizes the subcellular localization of a variety of membrane proteins. May link various receptors to the actin cytoskeleton and the dystrophin glycoprotein complex. The protein is Beta-1-syntrophin (SNTB1) of Homo sapiens (Human).